Here is a 374-residue protein sequence, read N- to C-terminus: MKETRDPSQIRVVVGMSGGVDSSVAAYLLKQQGYEVIGIFMKNWDDTDENGVCTATEDYDDVIKVCNQIGIPYYAVNFEKQYWDKVFTYFLEEYKAGRTPNPDVMCNKEIKFKAFLEHAMSLGADYLATGHYARIDRSGDGEVKMLRGVDNNKDQTYFLNQLSQEQLAHVMFPIGDIEKKEVRKIAEEAGLATAKKKDSTGICFIGERNFKEFLSQFLPAQPGNMETMDGVVMGKHDGLMYYTLGQRHGLGIGGDGEPWFVLGKDLERNVLLVGQGFDNEHLYSTSLSAVKMNYTSTKKLPGKFSCTAKFRYRQTDTPVEVELLADGRTHITFAEPVRAITPGQAVVLYDGEECIGGGTIDEVFKSNEKLTYVG.

ATP contacts are provided by residues 15 to 22 and methionine 41; that span reads GMSGGVDS. The segment at 101–103 is interaction with target base in tRNA; that stretch reads NPD. Cysteine 106 functions as the Nucleophile in the catalytic mechanism. A disulfide bridge connects residues cysteine 106 and cysteine 203. Glycine 130 contacts ATP. The tract at residues 153–155 is interaction with tRNA; sequence KDQ. Cysteine 203 functions as the Cysteine persulfide intermediate in the catalytic mechanism. The tract at residues 311 to 312 is interaction with tRNA; it reads RY.

This sequence belongs to the MnmA/TRMU family.

Its subcellular location is the cytoplasm. The enzyme catalyses S-sulfanyl-L-cysteinyl-[protein] + uridine(34) in tRNA + AH2 + ATP = 2-thiouridine(34) in tRNA + L-cysteinyl-[protein] + A + AMP + diphosphate + H(+). Its function is as follows. Catalyzes the 2-thiolation of uridine at the wobble position (U34) of tRNA, leading to the formation of s(2)U34. The protein is tRNA-specific 2-thiouridylase MnmA of Lysinibacillus sphaericus (strain C3-41).